Consider the following 265-residue polypeptide: Serine protease ami (265 aa).

The signal sequence occupies residues 1 to 21; the sequence is MNVSWALLAVVLVLTVATYEC. A glycan (N-linked (GlcNAc...) asparagine) is linked at Asn-2. Residues 22–26 constitute a propeptide, activation peptide; that stretch reads RPRGR. Positions 27–254 constitute a Peptidase S1 domain; the sequence is ILGGQDSKAE…YKSWIMESMY (228 aa). A disulfide bridge links Cys-52 with Cys-68. His-67 serves as the catalytic Charge relay system. N-linked (GlcNAc...) asparagine glycosylation is found at Asn-71, Asn-74, and Asn-108. Residue Asp-115 is the Charge relay system of the active site. Disulfide bonds link Cys-149-Cys-215, Cys-180-Cys-196, and Cys-205-Cys-230. The Charge relay system role is filled by Ser-209. N-linked (GlcNAc...) asparagine glycosylation is present at Asn-255.

It belongs to the peptidase S1 family.

The protein resides in the secreted. Its function is as follows. Probable serine protease. This chain is Serine protease ami, found in Xenopus tropicalis (Western clawed frog).